Here is a 420-residue protein sequence, read N- to C-terminus: WD repeat-containing protein jip5 (420 aa).

WD repeat units follow at residues 9–48 (PLSA…VDSD), 72–111 (RHKG…VENK), 117–158 (DKNG…SKVS), 221–262 (VSSV…DQDE), 271–314 (GGGE…VVSE), and 318–355 (DETE…GDGV). The segment at 39–63 (RLPSDEVDSDDDGASTSSSRTGRGH) is disordered. The disordered stretch occupies residues 350 to 420 (DSGDGVNGNE…QAVMAFHDLD (71 aa)). A compositionally biased stretch (acidic residues) spans 368–387 (DDSDEDSDDGDDDDDSGDSD). The segment covering 394-406 (DARKKRKKGKTPK) has biased composition (basic residues).

The protein belongs to the WD repeat WDR55 family.

It is found in the nucleus. The protein localises to the nucleolus. The protein is WD repeat-containing protein jip5 (jip5) of Aspergillus terreus (strain NIH 2624 / FGSC A1156).